A 198-amino-acid chain; its full sequence is Large ribosomal subunit protein bL27c (198 aa).

The N-terminal 58 residues, 1-58 (MAMATSMSLNLIGAFKGLSLSSTSSFLRGDLSFSPKTSFTVTLPLENLQAPIPLTIES), are a transit peptide targeting the chloroplast.

Belongs to the bacterial ribosomal protein bL27 family. In terms of assembly, part of the 50S ribosomal subunit.

The protein localises to the plastid. Its subcellular location is the chloroplast. In Arabidopsis thaliana (Mouse-ear cress), this protein is Large ribosomal subunit protein bL27c (RPL27).